Consider the following 648-residue polypeptide: Threonine--tRNA ligase (648 aa).

In terms of domain architecture, TGS spans 1–61 (MINITFPDGA…TEDGSIEIVT (61 aa)). The tract at residues 242–540 (DHRKLGKELD…LIENYKGAFP (299 aa)) is catalytic. Zn(2+) contacts are provided by cysteine 336, histidine 387, and histidine 517.

Belongs to the class-II aminoacyl-tRNA synthetase family. In terms of assembly, homodimer. Zn(2+) serves as cofactor.

The protein resides in the cytoplasm. The enzyme catalyses tRNA(Thr) + L-threonine + ATP = L-threonyl-tRNA(Thr) + AMP + diphosphate + H(+). Catalyzes the attachment of threonine to tRNA(Thr) in a two-step reaction: L-threonine is first activated by ATP to form Thr-AMP and then transferred to the acceptor end of tRNA(Thr). Also edits incorrectly charged L-seryl-tRNA(Thr). In Streptococcus thermophilus (strain ATCC BAA-250 / LMG 18311), this protein is Threonine--tRNA ligase.